The primary structure comprises 218 residues: Probable transaldolase 2 (218 aa).

K83 functions as the Schiff-base intermediate with substrate in the catalytic mechanism.

It belongs to the transaldolase family. Type 3B subfamily.

The protein localises to the cytoplasm. It catalyses the reaction D-sedoheptulose 7-phosphate + D-glyceraldehyde 3-phosphate = D-erythrose 4-phosphate + beta-D-fructose 6-phosphate. It participates in carbohydrate degradation; pentose phosphate pathway; D-glyceraldehyde 3-phosphate and beta-D-fructose 6-phosphate from D-ribose 5-phosphate and D-xylulose 5-phosphate (non-oxidative stage): step 2/3. Functionally, transaldolase is important for the balance of metabolites in the pentose-phosphate pathway. The polypeptide is Probable transaldolase 2 (Listeria innocua serovar 6a (strain ATCC BAA-680 / CLIP 11262)).